A 117-amino-acid chain; its full sequence is Photosystem II reaction center Psb28 protein (117 aa).

It belongs to the Psb28 family. As to quaternary structure, part of the photosystem II complex.

The protein resides in the cellular thylakoid membrane. This is Photosystem II reaction center Psb28 protein from Prochlorococcus marinus (strain MIT 9312).